Reading from the N-terminus, the 101-residue chain is Growth-regulated alpha protein (101 aa).

An N-terminal signal peptide occupies residues 1-28; that stretch reads MAPATRSLLRAPLLLLLLLLATSRLATG. Disulfide bonds link Cys37-Cys63 and Cys39-Cys79.

Belongs to the intercrine alpha (chemokine CxC) family.

It is found in the secreted. Has chemotactic activity for neutrophils. The polypeptide is Growth-regulated alpha protein (CXCL1) (Cricetulus griseus (Chinese hamster)).